Reading from the N-terminus, the 240-residue chain is MKIKIIFSYDGTAFLGSATQPHKKGVQDALSGALSHLGIFSPLLMASRTDKGVHASYAVASVECGDYFTNLEYLQKQLNKFSHPFIHIKKIEKVKDDFEVRFDVKSREYRYIFSHSSYSPFMASYVHFYPKFDLDKANELLGFFVGKKDLKFFCKSGGDNKTTLREIFIARAYAYKDFSIFHFKANGFLRGQIRLSVASVLKVLEGKMSEKELKEQIEAKKQYNHFLAPPNGLYLSRICY.

D50 functions as the Nucleophile in the catalytic mechanism. Y109 contacts substrate.

This sequence belongs to the tRNA pseudouridine synthase TruA family. Homodimer.

The catalysed reaction is uridine(38/39/40) in tRNA = pseudouridine(38/39/40) in tRNA. In terms of biological role, formation of pseudouridine at positions 38, 39 and 40 in the anticodon stem and loop of transfer RNAs. In Campylobacter jejuni (strain RM1221), this protein is tRNA pseudouridine synthase A.